We begin with the raw amino-acid sequence, 793 residues long: MIKDKESPIRSCHFVYIVALVFGTIIQFSDESEFVVDMSKTSLIHVPKDLPPKTKVLDLSQNNISELHLSDISFLSGLRVLRLSHNRIQGLDISIFKFNHDLEYLDLSHNQLQKISCHPITTTLKHLDLSFNDFDALPICKEFGNLTQLNFLGLSATKLQQLDLLPIAHLHLSCILLDLEDYMKENKKESLQILNTKKLHLVFHPNSFFSVQVDISANSLGCLQLTNIKLNDYNCQVLLKFLSGLTGGPTLLNFTLNHVETTWKCLVKVFQFLWPKPIEYLNIYNLTIVESIDEEVFTYYKTTLKALKIEHITNKVFIFSQTALYTVFSEMNILMLTISDTRFIHMLCPQEPSTFKFLNFTQNSFTDSVFQNCDTLARLETLILQKNELKDLFKTSLMTKDMLSLETLDVSWNSLEYDRSNGNCSWVGSIVVLNLSSNALTDSVFRCLPPRIKVLDLHNNRIRSIPKDVTGLETLQELNLASNSLAHLPGCGIFSSLSILIIEHNSISNPSADFFQSCQKIRSLKAGNNPFQCSCELRDFIQSVGQVSSDVVEGWPESYKCDYPESYKGTPLKDFQVSELSCNTALLIITIVVPGLVLAVAVTVLCIYLDLPWYLRMVCQWTQTRRRARNVPLEELQRTLQFHAFISYSEHDSAWVKNELIPNLEKEDIRICLHERNFVAGKSIVENIINCIEKSYKSIFVLSPNFVQSEWCHYELYFAHHNLFHEGSDNLILILLDPIPQYSIPSSYHKLRALMAQRTYLEWPKEKSKHGLFWANLRASINIKLMEKAAEIH.

The signal sequence occupies residues 1-23 (MIKDKESPIRSCHFVYIVALVFG). Over 24 to 584 (TIIQFSDESE…FQVSELSCNT (561 aa)) the chain is Extracellular. LRR repeat units lie at residues 54–77 (TKVL…FLSG), 78–101 (LRVL…FNHD), 102–122 (LEYL…PITT), 123–147 (TLKH…GNLT), 148–168 (QLNF…LPIA), 169–196 (HLHL…ILNT), 197–219 (KKLH…SANS), 220–250 (LGCL…GGPT), 251–277 (LLNF…WPKP), 278–303 (IEYL…YKTT), 304–330 (LKAL…VFSE), 331–354 (MNIL…EPST), 355–378 (FKFL…TLAR), 379–404 (LETL…DMLS), 405–428 (LETL…SWVG), 429–449 (SIVV…RCLP), 450–473 (PRIK…TGLE), 474–495 (TLQE…GIFS), and 496–519 (SLSI…QSCQ). N63 carries an N-linked (GlcNAc...) asparagine glycan. A disulfide bond links C117 and C140. An N-linked (GlcNAc...) asparagine glycan is attached at N145. C235 and C265 are disulfide-bonded. N-linked (GlcNAc...) asparagine glycosylation is found at N253 and N285. A disulfide bridge links C348 with C373. N-linked (GlcNAc...) asparagine glycosylation is present at N359. N-linked (GlcNAc...) asparagine glycans are attached at residues N423 and N434. The cysteines at positions 424 and 447 are disulfide-linked. One can recognise an LRRCT domain in the interval 520 to 575 (KIRSLKAGNNPFQCSCELRDFIQSVGQVSSDVVEGWPESYKCDYPESYKGTPLKDF). The helical transmembrane segment at 585-605 (ALLIITIVVPGLVLAVAVTVL) threads the bilayer. Over 606–793 (CIYLDLPWYL…KLMEKAAEIH (188 aa)) the chain is Cytoplasmic. The region spanning 640 to 781 (LQFHAFISYS…LFWANLRASI (142 aa)) is the TIR domain.

This sequence belongs to the Toll-like receptor family. In terms of assembly, homodimer (via cytoplasmic TIR domain). Heterodimer with TLR2 via their respective extracellular domains. Binds MYD88 via their respective TIR domains. Interacts with CD36, following CD36 stimulation by oxLDL or amyloid-beta 42, and forms a heterodimer with TLR4. The trimeric complex is internalized and triggers inflammatory response. LYN kinase activity facilitates TLR4-TLR6 heterodimerization and signal initiation. The heterodimer TLR2:TLR6 interacts with CD14 and CD36 in response to triacylated lipopeptides. Highest expression levels seen in blood and lymph node, intermediate expression seen in spleen and lowest expression seen in the liver, lung and udder cistern.

The protein resides in the cell membrane. It localises to the cytoplasmic vesicle. It is found in the phagosome membrane. The protein localises to the membrane raft. Its subcellular location is the golgi apparatus. Functionally, participates in the innate immune response to Gram-positive bacteria and fungi. Specifically recognizes diacylated and, to a lesser extent, triacylated lipopeptides. In response to diacylated lipopeptides, forms the activation cluster TLR2:TLR6:CD14:CD36, this cluster triggers signaling from the cell surface and subsequently is targeted to the Golgi in a lipid-raft dependent pathway. Acts via MYD88 and TRAF6, leading to NF-kappa-B activation, cytokine secretion and the inflammatory response. Recognizes mycoplasmal macrophage-activating lipopeptide-2kD (MALP-2), soluble tuberculosis factor (STF), phenol-soluble modulin (PSM) and B.burgdorferi outer surface protein A lipoprotein (OspA-L) cooperatively with TLR2. In complex with TLR4, promotes sterile inflammation in monocytes/macrophages in response to oxidized low-density lipoprotein (oxLDL) or amyloid-beta 42. In this context, the initial signal is provided by oxLDL- or amyloid-beta 42-binding to CD36. This event induces the formation of a heterodimer of TLR4 and TLR6, which is rapidly internalized and triggers inflammatory response, leading to the NF-kappa-B-dependent production of CXCL1, CXCL2 and CCL9 cytokines, via MYD88 signaling pathway, and CCL5 cytokine, via TICAM1 signaling pathway, as well as IL1B secretion. The chain is Toll-like receptor 6 from Bos taurus (Bovine).